The sequence spans 544 residues: MAKFVFVTGGVVSSIGKGIVAASLGRLLKSRGYRVSILKLDPYLNVDPGTMSPFQHGEVFVTEDGAETDLDLGHYERFTDTAMSRLNSVTTGSVYQSVINKERRGDYNGGTVQVIPHITGEIRERIHRVAANSNADVVITEIGGTVGDIESLPYLEAIREFRGDVGRNDLAYVHVTLLPYIGTSGELKTKPTQHSVKELRSIGIQPDILVCRSDRPIDDELKAKIGGFCGVPTKAVVPSLDADSIYAVPIALEKGGLCRQVLDVLSLQDHESDMASWEALVQKLRNPGPAVKVALVGKYVQLNDAYLSVVEALRHACIHCDSALDLHWICAEQIEENGADGLLKGMDAVVVPGGFGNRGVDGKIAAIRWAREQRVPFLGLCLGMQTAVIEWARNTAGLVGATSAELEPATTHPVIHLLPEQQDVVDLGGTMRLGVYPCRLSPGSKAHELYGEEVVYERHRHRYEFNNAYRNLFLESGYEISGVSPDGRLVELIELKGHPYFLACQYHPEFLSRPGRPHPLFTGLIQAASQRLPQSPSEAISQRA.

Residues 1 to 267 (MAKFVFVTGG…CRQVLDVLSL (267 aa)) are amidoligase domain. S13 lines the CTP pocket. Residue S13 participates in UTP binding. ATP-binding positions include 14–19 (SIGKGI) and D71. Residues D71 and E141 each contribute to the Mg(2+) site. Residues 148-150 (DIE), 188-193 (KTKPTQ), and K224 each bind CTP. Residues 188 to 193 (KTKPTQ) and K224 contribute to the UTP site. A Glutamine amidotransferase type-1 domain is found at 292–534 (KVALVGKYVQ…IQAASQRLPQ (243 aa)). Residue G354 coordinates L-glutamine. C381 serves as the catalytic Nucleophile; for glutamine hydrolysis. L-glutamine is bound by residues 382-385 (LGMQ), E405, and R462. Residues H507 and E509 contribute to the active site.

The protein belongs to the CTP synthase family. Homotetramer.

It catalyses the reaction UTP + L-glutamine + ATP + H2O = CTP + L-glutamate + ADP + phosphate + 2 H(+). The enzyme catalyses L-glutamine + H2O = L-glutamate + NH4(+). It carries out the reaction UTP + NH4(+) + ATP = CTP + ADP + phosphate + 2 H(+). It participates in pyrimidine metabolism; CTP biosynthesis via de novo pathway; CTP from UDP: step 2/2. With respect to regulation, allosterically activated by GTP, when glutamine is the substrate; GTP has no effect on the reaction when ammonia is the substrate. The allosteric effector GTP functions by stabilizing the protein conformation that binds the tetrahedral intermediate(s) formed during glutamine hydrolysis. Inhibited by the product CTP, via allosteric rather than competitive inhibition. Catalyzes the ATP-dependent amination of UTP to CTP with either L-glutamine or ammonia as the source of nitrogen. Regulates intracellular CTP levels through interactions with the four ribonucleotide triphosphates. This is CTP synthase from Synechococcus sp. (strain RCC307).